The following is a 344-amino-acid chain: Photosystem II protein D1 (344 aa).

Position 2 is an N-acetylthreonine (Thr-2). Thr-2 carries the post-translational modification Phosphothreonine. The next 3 helical transmembrane spans lie at 29 to 46 (YIGW…TATS), 118 to 133 (HFFL…EWEL), and 142 to 156 (WIAV…AATA). His-118 is a chlorophyll a binding site. Pheophytin a is bound at residue Tyr-126. [CaMn4O5] cluster-binding residues include Asp-170 and Glu-189. The chain crosses the membrane as a helical span at residues 197–218 (FHMLGVAGVFGGSLFSAMHGSL). His-198 lines the chlorophyll a pocket. A quinone-binding positions include His-215 and 264 to 265 (SF). His-215 provides a ligand contact to Fe cation. His-272 lines the Fe cation pocket. A helical membrane pass occupies residues 274–288 (FLAAWPVIGIWFTAL). 4 residues coordinate [CaMn4O5] cluster: His-332, Glu-333, Asp-342, and Ala-344.

It belongs to the reaction center PufL/M/PsbA/D family. In terms of assembly, PSII is composed of 1 copy each of membrane proteins PsbA, PsbB, PsbC, PsbD, PsbE, PsbF, PsbH, PsbI, PsbJ, PsbK, PsbL, PsbM, PsbT, PsbX, PsbY, PsbZ, Psb30/Ycf12, at least 3 peripheral proteins of the oxygen-evolving complex and a large number of cofactors. It forms dimeric complexes. The D1/D2 heterodimer binds P680, chlorophylls that are the primary electron donor of PSII, and subsequent electron acceptors. It shares a non-heme iron and each subunit binds pheophytin, quinone, additional chlorophylls, carotenoids and lipids. D1 provides most of the ligands for the Mn4-Ca-O5 cluster of the oxygen-evolving complex (OEC). There is also a Cl(-1) ion associated with D1 and D2, which is required for oxygen evolution. The PSII complex binds additional chlorophylls, carotenoids and specific lipids. serves as cofactor. Post-translationally, tyr-161 forms a radical intermediate that is referred to as redox-active TyrZ, YZ or Y-Z.

It localises to the plastid. The protein resides in the chloroplast thylakoid membrane. The enzyme catalyses 2 a plastoquinone + 4 hnu + 2 H2O = 2 a plastoquinol + O2. Functionally, photosystem II (PSII) is a light-driven water:plastoquinone oxidoreductase that uses light energy to abstract electrons from H(2)O, generating O(2) and a proton gradient subsequently used for ATP formation. It consists of a core antenna complex that captures photons, and an electron transfer chain that converts photonic excitation into a charge separation. The D1/D2 (PsbA/PsbD) reaction center heterodimer binds P680, the primary electron donor of PSII as well as several subsequent electron acceptors. This chain is Photosystem II protein D1, found in Pleurastrum terricola (Filamentous green alga).